The primary structure comprises 395 residues: Renin (395 aa).

The N-terminal stretch at 1–21 (MLRSWEFVLLISCFLCFSSDA) is a signal peptide. Positions 22 to 43 (LQRISLKKMPSIRETLQEMGMK) are cleaved as a propeptide — activation peptide. Asparagine 64 is a glycosylation site (N-linked (GlcNAc...) asparagine). The Peptidase A1 domain occupies 79–392 (YYGEISIGTP…DRQNNRIGFA (314 aa)). Aspartate 97 is an active-site residue. Disulfide bonds link cysteine 110–cysteine 117 and cysteine 274–cysteine 278. Aspartate 283 is an active-site residue. Residues cysteine 316 and cysteine 351 are joined by a disulfide bond.

It belongs to the peptidase A1 family. Post-translationally, N-glycosylated. Expressed by the venom gland (at protein level).

Its subcellular location is the secreted. The catalysed reaction is Cleavage of Leu-|-Xaa bond in angiotensinogen to generate angiotensin I.. Inhibited completely by aspartyl protease inhibitor pepstatin A, but not by the serine- or metalloproteinase inhibitors PMSF or EDTA. Renin is a highly specific endopeptidase, whose only known function is to generate angiotensin I from angiotensinogen in the plasma, initiating a cascade of reactions that produce an elevation of blood pressure and increased sodium retention by the kidney. This protein is also found in snake venom and shown to specifically cleave human and porcine angiotensinogen into angiotensin I. It does not have general protease activity, no cleavage of alpha or beta casein. May be directly responsible for elevation of blood pressure in the victims of envenomation. In Echis ocellatus (Ocellated saw-scaled viper), this protein is Renin.